The chain runs to 1028 residues: Kinesin-like protein KIF28 (1028 aa).

The Kinesin motor domain maps to 11-358; sequence SVRVAVRVRP…LRYAERAKKV (348 aa). Residue 114 to 121 participates in ATP binding; the sequence is GQTGSGKS. The FHA domain occupies 460–523; sequence CDVGRAASNA…LQHLDRIILG (64 aa). Residues 873–902 are a coiled coil; it reads NQVPELYQKLLKLEQETELLRDVNRALRGE.

This sequence belongs to the TRAFAC class myosin-kinesin ATPase superfamily. Kinesin family.

Its subcellular location is the mitochondrion membrane. In terms of biological role, microtubule-dependent motor protein required for mitochondrion morphology and transport of mitochondria in neuronal cells. The sequence is that of Kinesin-like protein KIF28 from Mus musculus (Mouse).